We begin with the raw amino-acid sequence, 264 residues long: MKTVVLAVAVLFLTGSQARHFWQRDDPQTPWDRVKDFATVYVDAVKDSGREYVSQFETSALGKQLNLNLLENWDTLGSTVGRLQEQLGPVTQEFWDNLEKETEWLRREMNKDLEEVKAKVQPYLDQFQTKWQEEVALYRQKMEPLGAELRDGARQKLQELQEKLTPLGEDLRDRMRHHVDALRTKMTPYSDQMRDRLAERLAQLKDSPTLAEYHTKAADHLKAFGEKAKPALEDLRQGLMPVFESFKTRIMSMVEEASKKLNAQ.

Residues 1 to 18 (MKTVVLAVAVLFLTGSQA) form the signal peptide. 2 repeat units span residues 67-88 (LNLLENWDTLGSTVGRLQEQLG) and 89-110 (PVTQEFWDNLEKETEWLRREMN). The interval 67–264 (LNLLENWDTL…EEASKKLNAQ (198 aa)) is 10 X approximate tandem repeats. Residue Met109 is modified to Methionine sulfoxide. The stretch at 111-121 (KDLEEVKAKVQ) is one 3; half-length repeat. 5 repeat units span residues 122–143 (PYLDQFQTKWQEEVALYRQKME), 144–165 (PLGAELRDGARQKLQELQEKLT), 166–187 (PLGEDLRDRMRHHVDALRTKMT), 188–207 (PYSDQMRDRLAERLAQLKDS), and 208–229 (PTLAEYHTKAADHLKAFGEKAK). Met193 is subject to Methionine sulfoxide. The stretch at 230–240 (PALEDLRQGLM) is one 9; half-length repeat. Met240 carries the methionine sulfoxide modification. Repeat 10 spans residues 241–264 (PVFESFKTRIMSMVEEASKKLNAQ).

The protein belongs to the apolipoprotein A1/A4/E family. Homodimer. Interacts with APOA1BP and CLU. Component of a sperm activating protein complex (SPAP), consisting of APOA1, an immunoglobulin heavy chain, an immunoglobulin light chain and albumin. Interacts with NDRG1. Interacts with SCGB3A2. Interacts with NAXE and YJEFN3. Post-translationally, glycosylated. Palmitoylated. In terms of processing, phosphorylation sites are present in the extracellular medium. Major protein of plasma HDL, also found in chylomicrons.

The protein resides in the secreted. Functionally, participates in the reverse transport of cholesterol from tissues to the liver for excretion by promoting cholesterol efflux from tissues and by acting as a cofactor for the lecithin cholesterol acyltransferase (LCAT). As part of the SPAP complex, activates spermatozoa motility. The polypeptide is Apolipoprotein A-I (APOAI) (Mesocricetus auratus (Golden hamster)).